A 464-amino-acid chain; its full sequence is Desmin (464 aa).

Blocked amino end (Ser) is present on Ser2. The tract at residues 2 to 100 (SQSYSSSQRV…QEFLQTRTNE (99 aa)) is head. Ser7 and Ser23 each carry phosphoserine; by CDK1. Thr65 carries the phosphothreonine; by CDK1 modification. The region spanning 100 to 408 (EKVELQELND…KLLEGEENRI (309 aa)) is the IF rod domain. Residues 101-133 (KVELQELNDRFANYIEKVRFLEQQNALMVAEVN) form a coil 1A region. The interval 134 to 143 (RLRGKEPTRV) is linker 1. The interval 144–244 (AEMYEEELRE…HEEEIRELQA (101 aa)) is coil 1B. The tract at residues 245-260 (QLQEQHIQVEMDISKP) is linker 12. The segment at 261–279 (DLTAALRDIRAQYESIAAK) is coil 2A. The segment at 280–287 (NIAEAEEW) is linker 2. Residues 288–404 (YKSKVSDLTQ…ATYRKLLEGE (117 aa)) are coil 2B. Positions 405–464 (ENRISIPMHQTFASALNFRETSPDQRGSEVHTKKTVMIKTIETRDGEVVSEATQQQHEVL) are tail.

It belongs to the intermediate filament family. In terms of assembly, homomer.

It is found in the cytoplasm. The protein resides in the myofibril. The protein localises to the sarcomere. Its subcellular location is the z line. It localises to the cell membrane. It is found in the sarcolemma. Muscle-specific type III intermediate filament essential for proper muscular structure and function. Plays a crucial role in maintaining the structure of sarcomeres, inter-connecting the Z-disks and forming the myofibrils, linking them not only to the sarcolemmal cytoskeleton, but also to the nucleus and mitochondria, thus providing strength for the muscle fiber during activity. In adult striated muscle they form a fibrous network connecting myofibrils to each other and to the plasma membrane from the periphery of the Z-line structures. The polypeptide is Desmin (DES) (Gallus gallus (Chicken)).